The primary structure comprises 369 residues: 3-dehydroquinate synthase (369 aa).

Residues 75–80 (DGEEHK), 109–113 (GVIGD), 133–134 (TT), Lys146, Lys155, and 173–176 (TLKT) each bind NAD(+). Positions 188, 251, and 268 each coordinate Zn(2+).

The protein belongs to the sugar phosphate cyclases superfamily. Dehydroquinate synthase family. Requires Co(2+) as cofactor. It depends on Zn(2+) as a cofactor. The cofactor is NAD(+).

It localises to the cytoplasm. It catalyses the reaction 7-phospho-2-dehydro-3-deoxy-D-arabino-heptonate = 3-dehydroquinate + phosphate. Its pathway is metabolic intermediate biosynthesis; chorismate biosynthesis; chorismate from D-erythrose 4-phosphate and phosphoenolpyruvate: step 2/7. In terms of biological role, catalyzes the conversion of 3-deoxy-D-arabino-heptulosonate 7-phosphate (DAHP) to dehydroquinate (DHQ). The sequence is that of 3-dehydroquinate synthase from Legionella pneumophila (strain Corby).